The following is a 393-amino-acid chain: Acetylornithine aminotransferase 1 (393 aa).

Arg-131 lines the N(2)-acetyl-L-ornithine pocket. Residue 215–218 (DEVQ) coordinates pyridoxal 5'-phosphate. At Lys-244 the chain carries N6-(pyridoxal phosphate)lysine. Position 272 (Thr-272) interacts with N(2)-acetyl-L-ornithine. Pyridoxal 5'-phosphate is bound at residue Thr-273.

Belongs to the class-III pyridoxal-phosphate-dependent aminotransferase family. ArgD subfamily. In terms of assembly, homodimer. Pyridoxal 5'-phosphate is required as a cofactor.

It localises to the cytoplasm. The enzyme catalyses N(2)-acetyl-L-ornithine + 2-oxoglutarate = N-acetyl-L-glutamate 5-semialdehyde + L-glutamate. Its pathway is amino-acid biosynthesis; L-arginine biosynthesis; N(2)-acetyl-L-ornithine from L-glutamate: step 4/4. This is Acetylornithine aminotransferase 1 from Bordetella parapertussis (strain 12822 / ATCC BAA-587 / NCTC 13253).